A 128-amino-acid polypeptide reads, in one-letter code: Probable 4-amino-4-deoxy-L-arabinose-phosphoundecaprenol flippase subunit ArnF (128 aa).

The Cytoplasmic portion of the chain corresponds to 1-5 (MKGYG). Residues 6–26 (WGIGSVVLVTVAQLILKWGMM) form a helical membrane-spanning segment. Over 27–47 (NTPLMSLADINGQFVFNHLPQ) the chain is Periplasmic. Residues 48 to 68 (FIAVICGLAGYALSMLCWFFA) traverse the membrane as a helical segment. At 69-77 (LRYLPLNRA) the chain is on the cytoplasmic side. Residues 78–98 (YPLLSLSYALVYLGAVSLPWF) traverse the membrane as a helical segment. The Periplasmic portion of the chain corresponds to 99-101 (SES). A helical transmembrane segment spans residues 102 to 122 (ATLLKTLGAGFILLGIWLINT). At 123–128 (KPIAKD) the chain is on the cytoplasmic side.

The protein belongs to the ArnF family. As to quaternary structure, heterodimer of ArnE and ArnF.

The protein resides in the cell inner membrane. It functions in the pathway bacterial outer membrane biogenesis; lipopolysaccharide biosynthesis. Translocates 4-amino-4-deoxy-L-arabinose-phosphoundecaprenol (alpha-L-Ara4N-phosphoundecaprenol) from the cytoplasmic to the periplasmic side of the inner membrane. The protein is Probable 4-amino-4-deoxy-L-arabinose-phosphoundecaprenol flippase subunit ArnF of Yersinia enterocolitica serotype O:8 / biotype 1B (strain NCTC 13174 / 8081).